A 140-amino-acid polypeptide reads, in one-letter code: Hemoglobin subunit alpha (140 aa).

The 140-residue stretch at 1 to 140 (LSAADKGHVK…VSTVLTSKYR (140 aa)) folds into the Globin domain. Residue Ser2 is modified to Phosphoserine. Residues Lys6 and Lys10 each carry the N6-succinyllysine modification. Lys15 is modified (N6-acetyllysine; alternate). An N6-succinyllysine; alternate modification is found at Lys15. Position 23 is a phosphotyrosine (Tyr23). Ser34 carries the phosphoserine modification. Position 39 is an N6-succinyllysine (Lys39). The residue at position 48 (Ser48) is a Phosphoserine. An O2-binding site is contributed by His57. His86 provides a ligand contact to heme b. Ser101 is subject to Phosphoserine. Thr107 is modified (phosphothreonine). Residue Ser123 is modified to Phosphoserine. Thr133 and Thr136 each carry phosphothreonine. Ser137 is subject to Phosphoserine.

This sequence belongs to the globin family. Heterotetramer of two alpha chains and two beta chains. In terms of tissue distribution, red blood cells.

In terms of biological role, involved in oxygen transport from the lung to the various peripheral tissues. Functionally, hemopressin acts as an antagonist peptide of the cannabinoid receptor CNR1. Hemopressin-binding efficiently blocks cannabinoid receptor CNR1 and subsequent signaling. The protein is Hemoglobin subunit alpha (HBA) of Tragelaphus strepsiceros (Greater kudu).